The primary structure comprises 218 residues: Mitochondrial fission factor (218 aa).

The Cytoplasmic segment spans residues Met-1–Met-198. Thr-89 carries the phosphothreonine modification. Residues Ser-129, Ser-131, Ser-146, and Ser-171 each carry the phosphoserine modification. Residues Val-167–Met-198 are a coiled coil. The helical; Anchor for type IV membrane protein transmembrane segment at Val-199–Phe-216 threads the bilayer. The Mitochondrial intermembrane portion of the chain corresponds to Arg-217 to Arg-218.

It belongs to the Tango11 family. As to quaternary structure, homodimer. Interacts with DNM1L. Interacts with C11orf65/MFI; the interaction inhibits MFF interaction with DNM1L.

The protein resides in the mitochondrion outer membrane. It localises to the peroxisome. It is found in the cytoplasmic vesicle. Its subcellular location is the secretory vesicle. The protein localises to the synaptic vesicle. Functionally, plays a role in mitochondrial and peroxisomal fission. Promotes the recruitment and association of the fission mediator dynamin-related protein 1 (DNM1L) to the mitochondrial surface. May be involved in regulation of synaptic vesicle membrane dynamics by recruitment of DNM1L to clathrin-containing vesicles. This chain is Mitochondrial fission factor (Mff), found in Rattus norvegicus (Rat).